A 304-amino-acid polypeptide reads, in one-letter code: Quinolinate synthase (304 aa).

Iminosuccinate-binding residues include His24 and Ser41. Residue Cys86 participates in [4Fe-4S] cluster binding. Iminosuccinate is bound by residues 112–114 (YVN) and Ser129. Cys171 contacts [4Fe-4S] cluster. Iminosuccinate-binding positions include 197–199 (HPE) and Thr214. Cys259 lines the [4Fe-4S] cluster pocket.

Belongs to the quinolinate synthase family. Type 2 subfamily. Requires [4Fe-4S] cluster as cofactor.

The protein localises to the cytoplasm. It carries out the reaction iminosuccinate + dihydroxyacetone phosphate = quinolinate + phosphate + 2 H2O + H(+). It participates in cofactor biosynthesis; NAD(+) biosynthesis; quinolinate from iminoaspartate: step 1/1. Its function is as follows. Catalyzes the condensation of iminoaspartate with dihydroxyacetone phosphate to form quinolinate. This is Quinolinate synthase from Geobacter sp. (strain M21).